Here is a 2009-residue protein sequence, read N- to C-terminus: Sodium channel protein type 1 subunit alpha (2009 aa).

Residues 1–128 lie on the Cytoplasmic side of the membrane; that stretch reads MEQTVLVPPG…KIAIKILVHS (128 aa). Over residues 28–48 the composition is skewed to basic and acidic residues; sequence RIAEEKAKNPKPDKKDDDENG. The disordered stretch occupies residues 28–60; it reads RIAEEKAKNPKPDKKDDDENGPKPNSDLEAGKN. The I repeat unit spans residues 110-454; sequence ILTPFNPLRK…QQMLEQLKKQ (345 aa). A helical transmembrane segment spans residues 129-146; sequence LFSMLIMCTILTNCVFMT. Residues 147-152 are Extracellular-facing; that stretch reads MSNPPD. Residues 153-177 traverse the membrane as a helical segment; the sequence is WTKNVEYTFTGIYTFESLIKIIARG. Over 178–188 the chain is Cytoplasmic; it reads FCLEDFTFLRD. Residues 189-205 traverse the membrane as a helical segment; the sequence is PWNWLDFTVITFAYVTE. Residues 206 to 213 are Extracellular-facing; that stretch reads FVDLGNVS. The chain crosses the membrane as a helical span at residues 214-235; that stretch reads ALRTFRVLRALKTISVIPGLKT. At 236–245 the chain is on the cytoplasmic side; it reads IVGALIQSVK. The helical transmembrane segment at 246–269 threads the bilayer; the sequence is KLSDVMILTVFCLSVFALIGLQLF. The Extracellular portion of the chain corresponds to 270–369; the sequence is MGNLRNKCVQ…YGYTSFDTFS (100 aa). Disulfide bonds link C277–C345 and C336–C351. Residues N295, N301, N306, and N338 are each glycosylated (N-linked (GlcNAc...) asparagine). The segment at residues 370–384 is an intramembrane region (pore-forming); the sequence is WAFLSLFRLMTQDFW. Residues 385–397 are Extracellular-facing; the sequence is ENLYQLTLRAAGK. Residues 398–423 traverse the membrane as a helical segment; the sequence is TYMIFFVLVIFLGSFYLINLILAVVA. At 424–768 the chain is on the cytoplasmic side; the sequence is MAYEEQNQAT…HIVNLVVMDP (345 aa). The tract at residues 455–528 is disordered; sequence QEAAQQAAAT…EFHKSESEDS (74 aa). Over residues 456-466 the composition is skewed to low complexity; the sequence is EAAQQAAATTA. Phosphoserine is present on S470. Low complexity predominate over residues 479 to 492; that stretch reads LSDSSSEASKLSSK. Residues 495–506 are compositionally biased toward basic residues; sequence KERRNRRKKRKQ. A compositionally biased stretch (basic and acidic residues) spans 507–528; sequence KEQSGGEEKDDDEFHKSESEDS. Phosphoserine is present on residues S523, S525, S550, S551, S607, and S730. The interval 584–627 is disordered; sequence VGSENDFADDEHSTFEDNESRRDSLFVPRRHGERRNSNLSQTSR. Over residues 593–607 the composition is skewed to basic and acidic residues; sequence DEHSTFEDNESRRDS. Residues 750–1022 form an II repeat; it reads CSPYWLKVKH…QIAVDRMHKG (273 aa). A helical transmembrane segment spans residues 769-787; it reads FVDLAITICIVLNTLFMAM. Residues 788–797 are Extracellular-facing; the sequence is EHYPMTEHFN. The helical transmembrane segment at 798-820 threads the bilayer; sequence HVLTVGNLVFTGIFTAEMFLKII. Residues 821-830 are Cytoplasmic-facing; sequence AMDPYYYFQE. A helical transmembrane segment spans residues 831-849; the sequence is GWNIFDGFIVTLSLVELGL. Topologically, residues 850-854 are extracellular; that stretch reads ANVEG. The helical transmembrane segment at 855 to 874 threads the bilayer; sequence LSVLRSFRLLRVFKLAKSWP. The Cytoplasmic segment spans residues 875-891; it reads TLNMLIKIIGNSVGALG. Residues 892-912 traverse the membrane as a helical segment; sequence NLTLVLAIIVFIFAVVGMQLF. The Extracellular portion of the chain corresponds to 913–938; that stretch reads GKSYKDCVCKIATDCKLPRWHMNDFF. C921 and C927 are oxidised to a cystine. The segment at residues 939–952 is an intramembrane region (pore-forming); the sequence is HSFLIVFRVLCGEW. Over 953–965 the chain is Extracellular; the sequence is IETMWDCMEVAGQ. C959 and C968 are joined by a disulfide. Residues 966-992 traverse the membrane as a helical segment; the sequence is AMCLTVFMMVMVIGNLVVLNLFLALLL. At 993–1218 the chain is on the cytoplasmic side; that stretch reads SSFSADNLAA…RTCFRIVEHN (226 aa). A disordered region spans residues 1129–1163; the sequence is TEDFSSESDLEESKEKLNESSSSSEGSTVDIGAPA. An III repeat occupies 1200-1514; it reads RGKQWWNLRR…KKYYNAMKKL (315 aa). A helical transmembrane segment spans residues 1219–1237; it reads WFETFIVFMILLSSGALAF. Over 1238-1250 the chain is Extracellular; that stretch reads EDIYIDQRKTIKT. A helical membrane pass occupies residues 1251–1276; sequence MLEYADKVFTYIFILEMLLKWVAYGY. The Cytoplasmic portion of the chain corresponds to 1277–1278; the sequence is QT. Residues 1279–1304 traverse the membrane as a helical segment; the sequence is YFTNAWCWLDFLIVDVSLVSLTANAL. Topologically, residues 1305–1313 are extracellular; that stretch reads GYSELGAIK. Residues 1314–1332 traverse the membrane as a helical segment; sequence SLRTLRALRPLRALSRFEG. Topologically, residues 1333-1345 are cytoplasmic; that stretch reads MRVVVNALLGAIP. Residues 1346 to 1369 traverse the membrane as a helical segment; that stretch reads SIMNVLLVCLIFWLIFSIMGVNLF. Topologically, residues 1370–1415 are extracellular; it reads AGKFYHCVNTTTGDIFEISEVNNHSDCLKLIERNETARWKNVKVNF. A disulfide bridge links C1376 with C1396. An intramembrane region (pore-forming) is located at residues 1416–1433; the sequence is DNVGFGYLSLLQVATFKG. Residues 1434–1457 lie on the Extracellular side of the membrane; the sequence is WMDIMYAAVDSRNVELQPKYEESL. A helical membrane pass occupies residues 1458–1483; that stretch reads YMYLYFVIFIIFGSFFTLNLFIGVII. Topologically, residues 1484–1541 are cytoplasmic; the sequence is DNFNQQKKKFGGQDIFMTEEQKKYYNAMKKLGSKKPQKPIPRPGNKFQGMVFDFVTRQ. S1516 is subject to Phosphoserine; by PKC. An IV repeat occupies 1523–1821; sequence IPRPGNKFQG…WEKFDPDATQ (299 aa). Residues 1542–1560 traverse the membrane as a helical segment; that stretch reads VFDISIMILICLNMVTMMV. The Extracellular segment spans residues 1561-1571; that stretch reads ETDDQSDYVTS. The segment at 1561–1571 is S1-S2 loop of repeat IV; that stretch reads ETDDQSDYVTS. The chain crosses the membrane as a helical span at residues 1572–1593; that stretch reads ILSRINLVFIVLFTGECVLKLI. Over 1594–1601 the chain is Cytoplasmic; sequence SLRHYYFT. A helical transmembrane segment spans residues 1602–1623; it reads IGWNIFDFVVVILSIVGMFLAE. The S3b-S4 loop of repeat IV stretch occupies residues 1619 to 1636; sequence MFLAELIEKYFVSPTLFR. Topologically, residues 1624–1636 are extracellular; that stretch reads LIEKYFVSPTLFR. A helical transmembrane segment spans residues 1637–1655; sequence VIRLARIGRILRLIKGAKG. Over 1656–1665 the chain is Cytoplasmic; sequence IRTLLFALMM. Residues 1666 to 1688 traverse the membrane as a helical segment; sequence SLPALFNIGLLLFLVMFIYAIFG. The Extracellular portion of the chain corresponds to 1689-1711; that stretch reads MSNFAYVKREVGIDDMFNFETFG. An intramembrane region (pore-forming) is located at residues 1712–1726; that stretch reads NSMICLFQITTSAGW. Residues 1727 to 1759 lie on the Extracellular side of the membrane; it reads DGLLAPILNSKPPDCDPNKVNPGSSVKGDCGNP. A disulfide bond links C1741 and C1756. Residues 1760–1788 traverse the membrane as a helical segment; it reads SVGIFFFVSYIIISFLVVVNMYIAVILEN. Residues 1789-2009 lie on the Cytoplasmic side of the membrane; that stretch reads FSVATEESAE…EGKDEKAKGK (221 aa). One can recognise an IQ domain in the interval 1915 to 1944; sequence EEVSAVIIQRAYRRHLLKRTVKQASFTYNK. Positions 1984–2009 are disordered; that stretch reads PSYDRVTKPIVEKHEQEGKDEKAKGK. A compositionally biased stretch (basic and acidic residues) spans 1988–2009; the sequence is RVTKPIVEKHEQEGKDEKAKGK.

Belongs to the sodium channel (TC 1.A.1.10) family. Nav1.1/SCN1A subfamily. As to quaternary structure, the Nav1.1 voltage-gated sodium channel consists of an ion-conducting alpha subunit SCN1A which is functional on its own regulated by one or more beta-1 (SCN1B), beta-2 (SCN2B), beta-3 (SCN3B) and beta-4 (SCN4B) subunits. SCN1B and SCN3B are non-covalently associated with SCN1A. SCN2B and SCN4B are disulfide-linked to SCN1A. SCN1B regulates both the expression at the plasma membrane and the voltage dependence of Nav1.1 inactivation. SCN3B and SCN4B reduce Nav1.1 conductance. Probably interacts with TMEM233; modulates the gating properties of NaV1.1. Interacts with FGF13; regulates the steady-state inactivation of Nav.1.1. Post-translationally, phosphorylation at Ser-1516 by PKC in a highly conserved cytoplasmic loop slows inactivation of the sodium channel and reduces peak sodium currents. As to expression, present in cerebellar Purkinje neurons (at protein level). Expressed by myelinated, non-C-fiber neurons in sensory ganglia.

The protein localises to the cell membrane. It carries out the reaction Na(+)(in) = Na(+)(out). With respect to regulation, activated by the spider toxins Hm1a and Hm1b (H.maculata, AC P60992 and AC P0DOC5) eliciting acute pain and mechanical allodynia. Pore-forming subunit of Nav1.1, a voltage-gated sodium (Nav) channel that directly mediates the depolarizing phase of action potentials in excitable membranes. Navs, also called VGSCs (voltage-gated sodium channels) or VDSCs (voltage-dependent sodium channels), operate by switching between closed and open conformations depending on the voltage difference across the membrane. In the open conformation they allow Na(+) ions to selectively pass through the pore, along their electrochemical gradient. The influx of Na(+) ions provokes membrane depolarization, initiating the propagation of electrical signals throughout cells and tissues. By regulating the excitability of neurons, ensures that they respond appropriately to synaptic inputs, maintaining the balance between excitation and inhibition in brain neural circuits. Nav1.1 plays a role in controlling the excitability and action potential propagation from somatosensory neurons, thereby contributing to the sensory perception of mechanically-induced pain. The protein is Sodium channel protein type 1 subunit alpha of Mus musculus (Mouse).